The sequence spans 391 residues: Putative B3 domain-containing protein Os08g0325100 (391 aa).

The segment at residues 32–125 (GDFQHEIRGE…QFDVIIFDQV (94 aa)) is a DNA-binding region (TF-B3). The segment at 143–232 (VQEGRTDATE…SSRAHPQPMP (90 aa)) is disordered. Polar residues predominate over residues 172–226 (EGRTNATETLNSSRAHSQPMPMQTPATETLNSSRAHSQDMPMQSPATETLNSSRA).

It localises to the nucleus. The protein is Putative B3 domain-containing protein Os08g0325100 of Oryza sativa subsp. japonica (Rice).